Here is a 248-residue protein sequence, read N- to C-terminus: Adenosylcobinamide-GDP ribazoletransferase (248 aa).

7 helical membrane passes run Glu24–Trp44, Ile70–Ser90, Val106–Leu126, Ile134–Ala154, Ile168–Leu188, Gly189–Ile209, and Ala228–Ile248.

It belongs to the CobS family. Requires Mg(2+) as cofactor.

The protein localises to the cell membrane. It carries out the reaction alpha-ribazole + adenosylcob(III)inamide-GDP = adenosylcob(III)alamin + GMP + H(+). It catalyses the reaction alpha-ribazole 5'-phosphate + adenosylcob(III)inamide-GDP = adenosylcob(III)alamin 5'-phosphate + GMP + H(+). Its pathway is cofactor biosynthesis; adenosylcobalamin biosynthesis; adenosylcobalamin from cob(II)yrinate a,c-diamide: step 7/7. In terms of biological role, joins adenosylcobinamide-GDP and alpha-ribazole to generate adenosylcobalamin (Ado-cobalamin). Also synthesizes adenosylcobalamin 5'-phosphate from adenosylcobinamide-GDP and alpha-ribazole 5'-phosphate. The protein is Adenosylcobinamide-GDP ribazoletransferase of Listeria monocytogenes serotype 4a (strain HCC23).